Consider the following 354-residue polypeptide: Membrane progestin receptor beta (354 aa).

Over 1–75 the chain is Cytoplasmic; sequence MTTAILQRLS…FFSLFQKHNE (75 aa). A helical transmembrane segment spans residues 76–96; it reads VVNVWTHLLAALAVLLRFWAF. The Extracellular portion of the chain corresponds to 97 to 111; the sequence is VETEGLPWTSAHTLP. Residues 112–132 form a helical membrane-spanning segment; the sequence is LLLYVLSSITYLTFSLLAHLL. Residues 133 to 174 are Cytoplasmic-facing; that stretch reads QSKSELSHYTFYFVDYVGVSVYQYGSALVHFFYASDQAWYER. Residues 175–195 form a helical membrane-spanning segment; the sequence is FWLFFLPAAAFCGWLSCTGCC. The Extracellular segment spans residues 196-213; sequence YAKYRYRRPYPVMRKVCQ. Residues 214–234 traverse the membrane as a helical segment; that stretch reads VVPAGLAFILDISPVAHRVAL. At 235 to 243 the chain is on the cytoplasmic side; it reads CHLSGCQEQ. A helical membrane pass occupies residues 244-264; sequence AAWYHTLQIVFFLVSAYFFSC. The Extracellular segment spans residues 265–283; that stretch reads PVPEKYFPGSCDIVGHGHQ. A helical membrane pass occupies residues 284 to 304; the sequence is IFHAFLSICTLSQLEAILLDY. Residues 305–319 are Cytoplasmic-facing; that stretch reads KGRQEIFLHRHSPLS. Residues 320–340 traverse the membrane as a helical segment; that stretch reads IYAACLSFFFLVACSGATAAL. At 341 to 354 the chain is on the extracellular side; it reads LREKIKARLSKKDS.

The protein belongs to the ADIPOR family.

The protein resides in the cell membrane. Functionally, steroid membrane receptor. Binds progesterone. May be involved in oocyte maturation. This chain is Membrane progestin receptor beta (PAQR8), found in Sus scrofa (Pig).